The primary structure comprises 149 residues: Antitoxin HigA1 (149 aa).

One can recognise an HTH cro/C1-type domain in the interval 42–96; it reads LIALRKHCQLSQVEVAKRMGVRQPTVSGFEKEPSDPKLSTLQRYARALDARLRLV. Positions 53-72 form a DNA-binding region, H-T-H motif; the sequence is QVEVAKRMGVRQPTVSGFEK.

In terms of assembly, interacts with SecB-like chaperone MT2006.

Antitoxin component of an atypical, type II toxin-antitoxin chaperone (TAC) system. Probably neutralizes the toxic effects of cognate toxin HigB1, which also requires SecB-like chaperone MT2006 (AC Q7D7P7). Autorepresses its operon (higB1-higA1-MT2006). The chain is Antitoxin HigA1 from Mycobacterium tuberculosis (strain CDC 1551 / Oshkosh).